The sequence spans 430 residues: Rosmarinate synthase (430 aa).

The Proton acceptor role is filled by His-152. The interval 178–210 (TPLPHFDRSSLSARNPPQPQFSHAEYQPPPTLE) is disordered. The Proton acceptor role is filled by Asp-377.

The protein belongs to the plant acyltransferase family.

The catalysed reaction is (2R)-3-(3,4-dihydroxyphenyl)lactate + (E)-caffeoyl-CoA = (R)-rosmarinate + CoA. Functionally, involved in the biosynthesis of rosmarinic acid, a compound with antiviral, antimicrobial and anti-inflammatory activities. Can use 4-coumaroyl- and caffeoyl-CoA as hydroxycinnamoyl donors and 4-Hydroxyphenyllactate and 3.4-Dihydroxyphenyllactate, but not shikimate or quinate, as hydroxycinnamoyl acceptors. Can also putatively catalyze amide formation with D-amino acids as acceptors. This chain is Rosmarinate synthase (RAS), found in Plectranthus scutellarioides (Coleus).